Here is a 226-residue protein sequence, read N- to C-terminus: Ribonuclease 3 (226 aa).

One can recognise an RNase III domain in the interval 6 to 128 (MKKLQKFIGY…IIASIFLDSN (123 aa)). Glu41 is a binding site for Mg(2+). The active site involves Asp45. Mg(2+) is bound by residues Asn114 and Glu117. The active site involves Glu117. The DRBM domain occupies 155 to 225 (DPKTRLQEYL…AQNALIRLEV (71 aa)).

It belongs to the ribonuclease III family. As to quaternary structure, homodimer. The cofactor is Mg(2+).

Its subcellular location is the cytoplasm. It carries out the reaction Endonucleolytic cleavage to 5'-phosphomonoester.. Digests double-stranded RNA. Involved in the processing of primary rRNA transcript to yield the immediate precursors to the large and small rRNAs (23S and 16S). Processes some mRNAs, and tRNAs when they are encoded in the rRNA operon. Processes pre-crRNA and tracrRNA of type II CRISPR loci if present in the organism. The polypeptide is Ribonuclease 3 (Buchnera aphidicola subsp. Cinara cedri (strain Cc)).